The primary structure comprises 186 residues: Quinone reductase (186 aa).

FMN is bound by residues 13–20 (SLRKESYN), 80–83 (EHNR), and Ser116.

It belongs to the SsuE family. Homotetramer. Dimer of dimers. The tetrameric configuration has a central role in chromate reductase activity. Requires FMN as cofactor.

The catalysed reaction is a quinone + NADH + H(+) = a quinol + NAD(+). It catalyses the reaction a quinone + NADPH + H(+) = a quinol + NADP(+). It carries out the reaction Cr(6+) + 2 NADH + O2 = Cr(3+) + superoxide + 2 NAD(+) + 2 H(+). The enzyme catalyses Cr(6+) + 2 NADPH + O2 = Cr(3+) + superoxide + 2 NADP(+) + 2 H(+). Its activity is regulated as follows. Non-competitively inhibited by sulfate. Its function is as follows. Catalyzes the reduction of quinones. Acts by simultaneous two-electron transfer, avoiding formation of highly reactive semiquinone intermediates and producing quinols that promote tolerance of H(2)O(2). Quinone reduction is probably the primary biological role of ChrR. Can also reduce toxic chromate to insoluble and less toxic Cr(3+). Catalyzes the transfer of three electrons to Cr(6+) producing Cr(3+) and one electron to molecular oxygen. This reaction produces transiently a minimal amount of the toxic Cr(5+) species and reactive oxygen species (ROS). Chromate reduction protects the cell against chromate toxicity, but is likely a secondary activity. The chain is Quinone reductase (chrR) from Pseudomonas putida (Arthrobacter siderocapsulatus).